The sequence spans 258 residues: UPF0246 protein YaaA (258 aa).

Belongs to the UPF0246 family.

The polypeptide is UPF0246 protein YaaA (Escherichia coli (strain SMS-3-5 / SECEC)).